Here is a 249-residue protein sequence, read N- to C-terminus: MTHQPQQSPQFFLTAPSPCPYLEGQQERKVYTHLVGDKANEINDLLTQGGFRRSQNIAYRPACEVCRACISVRILAGEFEMTRNMRRVWSQNRDLIGRVHKAQPSTEQYALFRDYLDARHRSGGMSDMTVLDYAMMIEDTHVNTQIIEYRRRGPDSFMSAKGDGELIAVALTDVMADGLSMVYSFFSPHMQERSLGTYMILDHIERARAAGLPHVYLGYWVEGSRKMQYKIRFTPQEHLGPRGWQRFEG.

Belongs to the R-transferase family. Bpt subfamily.

Its subcellular location is the cytoplasm. The enzyme catalyses N-terminal L-glutamyl-[protein] + L-leucyl-tRNA(Leu) = N-terminal L-leucyl-L-glutamyl-[protein] + tRNA(Leu) + H(+). It catalyses the reaction N-terminal L-aspartyl-[protein] + L-leucyl-tRNA(Leu) = N-terminal L-leucyl-L-aspartyl-[protein] + tRNA(Leu) + H(+). In terms of biological role, functions in the N-end rule pathway of protein degradation where it conjugates Leu from its aminoacyl-tRNA to the N-termini of proteins containing an N-terminal aspartate or glutamate. This is Aspartate/glutamate leucyltransferase from Brucella melitensis biotype 2 (strain ATCC 23457).